Consider the following 299-residue polypeptide: Fibrinogen silencer-binding protein (299 aa).

Lys94 participates in a covalent cross-link: Glycyl lysine isopeptide (Lys-Gly) (interchain with G-Cter in SUMO2).

In terms of assembly, interacts with APBA1 (via PDZ 1 and 2 domains). Expressed in multiple tissues including brain.

The protein resides in the nucleus. Its function is as follows. Transcriptional repressor that down-regulates the expression of the fibrinogen gamma chain. Represses transcription of GSK3B gene promoter via its interaction with APBA1. This is Fibrinogen silencer-binding protein (FSBP) from Homo sapiens (Human).